A 719-amino-acid chain; its full sequence is ATP-dependent RNA helicase SUV3 homolog, mitochondrial (719 aa).

The transit peptide at 1-18 (MRRASGVLRVLGGLTQRC) directs the protein to the mitochondrion. The segment at 16–42 (QRCSTSSTPSSSRFPAMNSRRKRNSVR) is disordered. One can recognise a Helicase ATP-binding domain in the interval 181-319 (EARSVTRKIF…PAAIDIVKKL (139 aa)). Residue 194–201 (GPTNSGKT) participates in ATP binding. Positions 343 to 499 (KAIESYSNIE…PTYDQIETFS (157 aa)) constitute a Helicase C-terminal domain. Positions 662 to 692 (SKAAGSSKSSEGKRENPSKSEREKPNKRSSI) are disordered. Over residues 671–687 (SEGKRENPSKSEREKPN) the composition is skewed to basic and acidic residues. The stretch at 693–717 (LEALLKRADISEDDLEQLREELNKN) forms a coiled coil.

This sequence belongs to the helicase family. Requires Mg(2+) as cofactor. The cofactor is Mn(2+).

It is found in the mitochondrion matrix. Its subcellular location is the nucleus. It carries out the reaction ATP + H2O = ADP + phosphate + H(+). Its function is as follows. ATPase and DNA/RNA helicase able to unwind DNA/DNA, DNA/RNA and RNA/RNA duplexes in the 5'-3' direction. The sequence is that of ATP-dependent RNA helicase SUV3 homolog, mitochondrial from Caenorhabditis elegans.